A 574-amino-acid chain; its full sequence is Sodium/hydrogen exchanger 8 (574 aa).

Transmembrane regions (helical) follow at residues 53 to 73, 77 to 97, 116 to 136, 149 to 169, 184 to 204, 254 to 274, 304 to 324, 347 to 367, 373 to 393, 410 to 430, and 444 to 464; these read MTIF…HLLI, LHFL…GAFI, PNMF…YSLH, LFSV…IYFL, FAFG…IFNA, LGYF…TGLI, GLAE…GIVM, VAFM…FSFP, SFVI…IFPL, MFIM…SLHL, and TTII…MPLI.

The protein belongs to the monovalent cation:proton antiporter 1 (CPA1) transporter (TC 2.A.36) family.

It localises to the golgi apparatus membrane. Its function is as follows. Involved in pH regulation to eliminate acids generated by active metabolism or to counter adverse environmental conditions. Major proton extruding system driven by the inward sodium ion chemical gradient. Plays an important role in signal transduction. The polypeptide is Sodium/hydrogen exchanger 8 (Gallus gallus (Chicken)).